Reading from the N-terminus, the 281-residue chain is Dexamethasone-induced Ras-related protein 1 (281 aa).

The residue at position 11 (cysteine 11) is an S-nitrosocysteine. 31–38 (GSSKVGKT) provides a ligand contact to GTP. Residues 53–61 (YTPTIEDFH) carry the Effector region motif. GTP-binding positions include 78 to 82 (DTSGN) and 145 to 148 (NKGD). The residue at position 278 (cysteine 278) is a Cysteine methyl ester. Cysteine 278 carries S-farnesyl cysteine lipidation. Residues 279–281 (VIS) constitute a propeptide, removed in mature form.

This sequence belongs to the small GTPase superfamily. RasD family. In terms of assembly, forms a ternary complex with CAPON and NOS1. Component of a complex, at least composed of APBB1, RASD1/DEXRAS1 and APP. Interacts with APBB1/FE65. Post-translationally, S-nitrosylation stimulates guanine-nucleotide exchange activity. As to expression, expressed in a variety of tissues including heart, cardiovascular tissues, brain, placenta, lung, liver, skeletal muscle, kidney, pancreas, gastrointestinal and reproductive tissues.

The protein localises to the cell membrane. The protein resides in the cytoplasm. Its subcellular location is the perinuclear region. It localises to the nucleus. Functionally, small GTPase. Negatively regulates the transcription regulation activity of the APBB1/FE65-APP complex via its interaction with APBB1/FE65. The protein is Dexamethasone-induced Ras-related protein 1 (RASD1) of Homo sapiens (Human).